The chain runs to 272 residues: 3-methyl-2-oxobutanoate hydroxymethyltransferase (272 aa).

The Mg(2+) site is built by Asp-43 and Asp-82. Residues 43–44 (DS), Asp-82, and Lys-112 contribute to the 3-methyl-2-oxobutanoate site. Glu-114 serves as a coordination point for Mg(2+). Glu-179 functions as the Proton acceptor in the catalytic mechanism.

This sequence belongs to the PanB family. In terms of assembly, homodecamer; pentamer of dimers. Mg(2+) serves as cofactor.

Its subcellular location is the cytoplasm. It catalyses the reaction 3-methyl-2-oxobutanoate + (6R)-5,10-methylene-5,6,7,8-tetrahydrofolate + H2O = 2-dehydropantoate + (6S)-5,6,7,8-tetrahydrofolate. The protein operates within cofactor biosynthesis; (R)-pantothenate biosynthesis; (R)-pantoate from 3-methyl-2-oxobutanoate: step 1/2. Catalyzes the reversible reaction in which hydroxymethyl group from 5,10-methylenetetrahydrofolate is transferred onto alpha-ketoisovalerate to form ketopantoate. In Staphylococcus aureus (strain MRSA252), this protein is 3-methyl-2-oxobutanoate hydroxymethyltransferase.